The following is a 258-amino-acid chain: Regulatory protein RecX (258 aa).

Belongs to the RecX family.

The protein localises to the cytoplasm. In terms of biological role, modulates RecA activity. The protein is Regulatory protein RecX of Streptococcus thermophilus (strain CNRZ 1066).